Here is a 243-residue protein sequence, read N- to C-terminus: 1-(5-phosphoribosyl)-5-[(5-phosphoribosylamino)methylideneamino] imidazole-4-carboxamide isomerase (243 aa).

Asp10 acts as the Proton acceptor in catalysis. Asp128 acts as the Proton donor in catalysis.

It belongs to the HisA/HisF family.

The protein localises to the cytoplasm. It carries out the reaction 1-(5-phospho-beta-D-ribosyl)-5-[(5-phospho-beta-D-ribosylamino)methylideneamino]imidazole-4-carboxamide = 5-[(5-phospho-1-deoxy-D-ribulos-1-ylimino)methylamino]-1-(5-phospho-beta-D-ribosyl)imidazole-4-carboxamide. Its pathway is amino-acid biosynthesis; L-histidine biosynthesis; L-histidine from 5-phospho-alpha-D-ribose 1-diphosphate: step 4/9. This Helicobacter hepaticus (strain ATCC 51449 / 3B1) protein is 1-(5-phosphoribosyl)-5-[(5-phosphoribosylamino)methylideneamino] imidazole-4-carboxamide isomerase.